A 224-amino-acid polypeptide reads, in one-letter code: Probable molybdenum cofactor guanylyltransferase (224 aa).

GTP contacts are provided by residues 20–22 (LAG), lysine 33, aspartate 88, and aspartate 117. A Mg(2+)-binding site is contributed by aspartate 117.

This sequence belongs to the MobA family. Mg(2+) serves as cofactor.

It localises to the cytoplasm. It carries out the reaction Mo-molybdopterin + GTP + H(+) = Mo-molybdopterin guanine dinucleotide + diphosphate. Functionally, transfers a GMP moiety from GTP to Mo-molybdopterin (Mo-MPT) cofactor (Moco or molybdenum cofactor) to form Mo-molybdopterin guanine dinucleotide (Mo-MGD) cofactor. This chain is Probable molybdenum cofactor guanylyltransferase, found in Methanosarcina mazei (strain ATCC BAA-159 / DSM 3647 / Goe1 / Go1 / JCM 11833 / OCM 88) (Methanosarcina frisia).